Reading from the N-terminus, the 88-residue chain is Small ribosomal subunit protein bS16c (88 aa).

The protein belongs to the bacterial ribosomal protein bS16 family.

Its subcellular location is the plastid. It is found in the chloroplast. This Oenothera elata subsp. hookeri (Hooker's evening primrose) protein is Small ribosomal subunit protein bS16c.